The following is a 143-amino-acid chain: MSAPASSSAIAPSQPTAPGHARHSASWSASASDPSGATCAVAPCTSLTPPRTRFDASQLQAHLSSTLAARLRNASWDKSDKDKNRALSRSIAEVIKLKMLEIEPKGFKFIVQVQLVENLGQGGSRPGVSLARHGQCCTGHVFE.

The disordered stretch occupies residues 1–37 (MSAPASSSAIAPSQPTAPGHARHSASWSASASDPSGA).

Belongs to the dynein light chain Tctex-type family.

This is an uncharacterized protein from Mycosarcoma maydis (Corn smut fungus).